The chain runs to 115 residues: Probable non-functional immunoglobulin heavy variable 3-38-3 (115 aa).

Positions 1–19 (MQFVLSWVFLVAILKGVQC) are cleaved as a signal peptide. The interval 20–44 (EVQLVESRGVLVQPGGSLRLSCAAS) is framework-1. The Ig-like domain maps to 31–115 (VQPGGSLRLS…EDTAVYYCKK (85 aa)). Cysteine 41 and cysteine 113 are joined by a disulfide. A complementarity-determining-1 region spans residues 45–52 (GFTVSSNE). The tract at residues 53–69 (MSWVRQAPGKGLEWVSS) is framework-2. The segment at 70–75 (ISGGST) is complementarity-determining-2. A framework-3 region spans residues 76–113 (YYADSRKGRFTISRDNSKNTLHLQMNSLRAEDTAVYYC). Residues 114–115 (KK) form a complementarity-determining-3 region.

Immunoglobulins are composed of two identical heavy chains and two identical light chains; disulfide-linked.

The protein localises to the secreted. The protein resides in the cell membrane. In terms of biological role, probable non-functional open reading frame (ORF) of V region of the variable domain of immunoglobulin heavy chains. Non-functional ORF generally cannot participate in the synthesis of a productive immunoglobulin chain due to altered V-(D)-J or switch recombination and/or splicing site (at mRNA level) and/or conserved amino acid change (protein level). Immunoglobulins, also known as antibodies, are membrane-bound or secreted glycoproteins produced by B lymphocytes. In the recognition phase of humoral immunity, the membrane-bound immunoglobulins serve as receptors which, upon binding of a specific antigen, trigger the clonal expansion and differentiation of B lymphocytes into immunoglobulins-secreting plasma cells. Secreted immunoglobulins mediate the effector phase of humoral immunity, which results in the elimination of bound antigens. The antigen binding site is formed by the variable domain of one heavy chain, together with that of its associated light chain. Thus, each immunoglobulin has two antigen binding sites with remarkable affinity for a particular antigen. The variable domains are assembled by a process called V-(D)-J rearrangement and can then be subjected to somatic hypermutations which, after exposure to antigen and selection, allow affinity maturation for a particular antigen. The chain is Probable non-functional immunoglobulin heavy variable 3-38-3 from Homo sapiens (Human).